The following is a 393-amino-acid chain: Cysteine protease ATG4B (393 aa).

C73 (nucleophile) is an active-site residue. Residues D278 and H280 contribute to the active site. The LIR signature appears at 388 to 391 (FEIL).

This sequence belongs to the peptidase C54 family.

The protein localises to the cytoplasm. It localises to the cytosol. It is found in the cytoplasmic vesicle. Its subcellular location is the autophagosome. The protein resides in the endoplasmic reticulum. The protein localises to the mitochondrion. The enzyme catalyses [protein]-C-terminal L-amino acid-glycyl-phosphatidylethanolamide + H2O = [protein]-C-terminal L-amino acid-glycine + a 1,2-diacyl-sn-glycero-3-phosphoethanolamine. The catalysed reaction is [protein]-C-terminal L-amino acid-glycyl-phosphatidylserine + H2O = [protein]-C-terminal L-amino acid-glycine + a 1,2-diacyl-sn-glycero-3-phospho-L-serine. In terms of biological role, cysteine protease that plays a key role in autophagy by mediating both proteolytic activation and delipidation of ATG8 family proteins. Required for canonical autophagy (macroautophagy), non-canonical autophagy as well as for mitophagy. The protease activity is required for proteolytic activation of ATG8 family proteins: cleaves the C-terminal amino acid of ATG8 proteins to reveal a C-terminal glycine. Exposure of the glycine at the C-terminus is essential for ATG8 proteins conjugation to phosphatidylethanolamine (PE) and insertion to membranes, which is necessary for autophagy. Protease activity is also required to counteract formation of high-molecular weight conjugates of ATG8 proteins (ATG8ylation): acts as a deubiquitinating-like enzyme that removes ATG8 conjugated to other proteins, such as ATG3. In addition to the protease activity, also mediates delipidation of ATG8 family proteins. Catalyzes delipidation of PE-conjugated forms of ATG8 proteins during macroautophagy. Also involved in non-canonical autophagy, a parallel pathway involving conjugation of ATG8 proteins to single membranes at endolysosomal compartments, by catalyzing delipidation of ATG8 proteins conjugated to phosphatidylserine (PS). This Gallus gallus (Chicken) protein is Cysteine protease ATG4B.